A 165-amino-acid chain; its full sequence is Ribosome maturation factor RimM (165 aa).

The region spanning 94-165 (EDEFYIADLN…YVILNYQTKV (72 aa)) is the PRC barrel domain.

This sequence belongs to the RimM family. Binds ribosomal protein uS19.

It is found in the cytoplasm. An accessory protein needed during the final step in the assembly of 30S ribosomal subunit, possibly for assembly of the head region. Essential for efficient processing of 16S rRNA. May be needed both before and after RbfA during the maturation of 16S rRNA. It has affinity for free ribosomal 30S subunits but not for 70S ribosomes. This chain is Ribosome maturation factor RimM, found in Rickettsia prowazekii (strain Madrid E).